Consider the following 263-residue polypeptide: Insulin-like growth factor-binding protein 1 (263 aa).

The signal sequence occupies residues 1–25; it reads MPEVLAVRAWPLLLSLAVQLGATVG. The IGFBP N-terminal domain occupies 28–109; the sequence is QPWRCAPCSA…TRGQGACMTT (82 aa). 6 disulfide bridges follow: Cys-32–Cys-59, Cys-35–Cys-61, Cys-43–Cys-62, Cys-50–Cys-65, Cys-73–Cys-86, and Cys-80–Cys-106. The interval 102–131 is disordered; that stretch reads GQGACMTTPSDEATDTKDTTSPENVSPESS. Phosphoserine is present on residues Ser-122, Ser-127, Ser-130, Ser-148, and Ser-160. Residues 122-131 show a composition bias toward polar residues; it reads SPENVSPESS. Position 162 is a phosphotyrosine (Tyr-162). One can recognise a Thyroglobulin type-1 domain in the interval 177–255; that stretch reads KEPCQRELYK…SVAVRGDPKC (79 aa). Cystine bridges form between Cys-180-Cys-210, Cys-221-Cys-232, and Cys-234-Cys-255. The residue at position 246 (Ser-246) is a Phosphoserine. Positions 250 to 252 match the Cell attachment site motif; it reads RGD.

In terms of assembly, binds equally well IGF1 and IGF2. Interacts with integrin ITGA5:ITGB1. Interacts with VHL; this interaction inhibits HIF1A degradation.

The protein resides in the secreted. Functionally, multifunctional protein that plays a critical role in regulating the availability of IGFs such as IGF1 and IGF2 to their receptors and thereby regulates IGF-mediated cellular processes including cell migration, proliferation, differentiation or apoptosis in a cell-type specific manner. Also plays a positive role in cell migration by interacting with integrin ITGA5:ITGB1 through its RGD motif. Mechanistically, binding to integrins leads to activation of focal adhesion kinase/PTK2 and stimulation of the mitogen-activated protein kinase (MAPK) pathway. Regulates cardiomyocyte apoptosis by suppressing HIF-1alpha/HIF1A degradation through ubiquitination. This chain is Insulin-like growth factor-binding protein 1 (IGFBP1), found in Bos taurus (Bovine).